Consider the following 516-residue polypeptide: Ammonium transporter Amt1 (516 aa).

The next 11 membrane-spanning stretches (helical) occupy residues 17–37, 59–79, 101–121, 130–150, 170–190, 214–234, 258–278, 286–306, 307–327, 342–362, and 374–394; these read YVWILVVSFLIFFMQPGFALL, ALGVLVYFVVGAGVATIVGGL, IDWLFGAVFAMTAATIVSGAV, YVVFAATITGFIYPVVQGLTW, LDFAGATVVHMCGGVAGLVGA, MLLAVLGTLILAFGWYGFNVG, VALVTTLGMGAGAVAAMVVST, PLWMANGLLAGLVAVTGAVPH, VTWWGGLVLGALGGAIVLPAY, VFAVHGVAGAVGTALIPVFAV, and VAGVGIIALWTIVASAVVFAA. The interval 426 to 516 is disordered; it reads IGESGPDRGV…SAAVDGGENQ (91 aa). Residues 445–491 show a composition bias toward basic and acidic residues; that stretch reads NDVRTDGGNDVRTDGGNDVRTDGGNDVRTDGGNDVRTDGGNDVRTDG.

It belongs to the ammonia transporter channel (TC 1.A.11.2) family. Homotrimer. Interacts with both GlnK1 and GlnK2 after ammonium shock. Interaction is rapid, reversible and dependent on nitrogen source.

It is found in the cell membrane. In terms of biological role, involved in the uptake of ammonium/ammonia (NH(4)(+)/NH(3)). Transport is electrogenic. This is Ammonium transporter Amt1 from Haloferax mediterranei (strain ATCC 33500 / DSM 1411 / JCM 8866 / NBRC 14739 / NCIMB 2177 / R-4) (Halobacterium mediterranei).